The primary structure comprises 305 residues: MHIHVLGSAAGGGFPQWNCNCPNCDGLRKGTIKAKKRTQSSICVSADGINWVLFNTSPDILQQIQEFAPLQPGRAIRDTGVVGIVLIDAQIDHTTGLLMLREGQVKREIYCTDMVYQDLTTGNPLLNILDHYCGVNRHDIPIDGKHSFSVEHAPGLRFTAVALKSAAPPYSPHRHDPHPGDTIGVLIEDLNNGKKAFYAPGLGEIEPHLPALMEQADCIMVDGTFWTDTEMLDMGLMSKKARDIGHNPQSGPGGMMEVLDGYPGARRVLIHINNTNPILREDSAERVELTRRGIEVAYDGMDIIL.

The protein belongs to the PqqB family.

It participates in cofactor biosynthesis; pyrroloquinoline quinone biosynthesis. Its function is as follows. May be involved in the transport of PQQ or its precursor to the periplasm. This is Coenzyme PQQ synthesis protein B from Methylobacillus flagellatus.